The following is a 141-amino-acid chain: Putative pre-16S rRNA nuclease (141 aa).

It belongs to the YqgF nuclease family.

It is found in the cytoplasm. In terms of biological role, could be a nuclease involved in processing of the 5'-end of pre-16S rRNA. This is Putative pre-16S rRNA nuclease from Chlorobium luteolum (strain DSM 273 / BCRC 81028 / 2530) (Pelodictyon luteolum).